Here is a 187-residue protein sequence, read N- to C-terminus: MNYFDNKIDQFATYLQKRNNLDHIQFLQVRLGMQIIVGNFFKILVTYSISIFLSVFLFTLVTHLSYMLIRYNAHGAHAKSSILCYIQSILTFVFVPYFLINIDINFTYLLALSIIGLISVVIYAPAATKKQPIPIKLVKRKKYLSIIMYLLVLILSLIIHPFYAQFMLLGILVESITLLPIFFPKED.

The next 5 membrane-spanning stretches (helical) occupy residues 49 to 69 (ISIF…YMLI), 82 to 102 (ILCY…LINI), 106 to 126 (FTYL…YAPA), 144 to 164 (LSII…PFYA), and 166 to 186 (FMLL…FPKE).

This sequence belongs to the AgrB family.

It is found in the cell membrane. Functionally, essential for the production of a quorum sensing system signal molecule, the autoinducing peptide (AIP). This quorum sensing system is responsible for the regulation of the expression of virulence factor genes. Involved in the proteolytic processing of AgrD, the precursor of AIP. In Staphylococcus aureus (strain Mu50 / ATCC 700699), this protein is Accessory gene regulator protein B.